Here is a 104-residue protein sequence, read N- to C-terminus: Toxin-like protein 14 (104 aa).

The N-terminal stretch at 1–25 (MNTYNARLYIFSLALALVILKGTKC) is a signal peptide.

Contains 4 disulfide bonds. As to expression, expressed by the venom gland.

The protein localises to the secreted. In Urodacus yaschenkoi (Inland robust scorpion), this protein is Toxin-like protein 14.